Consider the following 247-residue polypeptide: Small ribosomal subunit protein uS2 (247 aa).

The protein belongs to the universal ribosomal protein uS2 family.

This chain is Small ribosomal subunit protein uS2, found in Pseudomonas syringae pv. syringae (strain B728a).